The sequence spans 366 residues: Peroxisomal (S)-2-hydroxy-acid oxidase GLO4 (366 aa).

Positions 1–360 (MEDNLPVNVR…TRSHVMTEGD (360 aa)) constitute an FMN hydroxy acid dehydrogenase domain. Tyrosine 27 provides a ligand contact to a 2-oxocarboxylate. Residues 80–82 (PTG), serine 109, 130–132 (QLY), and threonine 158 contribute to the FMN site. Tyrosine 132 is an a 2-oxocarboxylate binding site. Residue arginine 167 coordinates a 2-oxocarboxylate. Residues lysine 231 and serine 253 each contribute to the FMN site. Residue histidine 255 is the Proton acceptor of the active site. Arginine 258 contributes to the a 2-oxocarboxylate binding site. FMN-binding positions include 286–290 (DGGIR) and 309–310 (GR). Positions 364–366 (SLL) match the Microbody targeting signal motif.

Belongs to the FMN-dependent alpha-hydroxy acid dehydrogenase family. In terms of assembly, homotetramer. Binds to CATB and CATC; these interactions are disturbed by alpha-hydroxy-2-pyridinemethanesulfonic acid (HPMS) and salicylic acid (SA). FMN serves as cofactor.

It is found in the peroxisome. It carries out the reaction a (2S)-2-hydroxycarboxylate + O2 = a 2-oxocarboxylate + H2O2. It functions in the pathway lipid metabolism; fatty acid metabolism. In terms of biological role, oxidase that catalyzes the oxidation of a broad range of 2-hydroxyacids to the corresponding 2-oxoacids, with a reduction of O2 to H2O2. May be involved in a general medium- and long-chain fatty acid catabolic pathway such as alpha-oxidation. In Oryza sativa subsp. japonica (Rice), this protein is Peroxisomal (S)-2-hydroxy-acid oxidase GLO4 (GLO4).